The following is a 127-amino-acid chain: Anti-adapter protein IraD (127 aa).

It belongs to the GpW/Gp25 family. IraD subfamily. In terms of assembly, interacts with RssB.

The protein resides in the cytoplasm. In terms of biological role, inhibits RpoS proteolysis by regulating RssB activity, thereby increasing the stability of the sigma stress factor RpoS during oxidative stress. Its effect on RpoS stability is due to its interaction with RssB, which probably blocks the interaction of RssB with RpoS, and the consequent delivery of the RssB-RpoS complex to the ClpXP protein degradation pathway. The protein is Anti-adapter protein IraD of Escherichia coli (strain SMS-3-5 / SECEC).